The following is a 338-amino-acid chain: Methionine synthase (338 aa).

Positions 210, 212, 234, and 294 each coordinate Zn(2+).

The protein belongs to the archaeal MetE family. It depends on Zn(2+) as a cofactor.

It participates in amino-acid biosynthesis; L-methionine biosynthesis via de novo pathway. In terms of biological role, catalyzes the transfer of a methyl group to L-homocysteine resulting in methionine formation. The physiological methyl donor is unknown. The polypeptide is Methionine synthase (Pyrococcus abyssi (strain GE5 / Orsay)).